Consider the following 390-residue polypeptide: Methylthioribose-1-phosphate isomerase (390 aa).

Asp258 serves as the catalytic Proton donor.

It belongs to the eIF-2B alpha/beta/delta subunits family. MtnA subfamily.

The protein resides in the cytoplasm. The protein localises to the nucleus. It catalyses the reaction 5-(methylsulfanyl)-alpha-D-ribose 1-phosphate = 5-(methylsulfanyl)-D-ribulose 1-phosphate. The protein operates within amino-acid biosynthesis; L-methionine biosynthesis via salvage pathway; L-methionine from S-methyl-5-thio-alpha-D-ribose 1-phosphate: step 1/6. Functionally, catalyzes the interconversion of methylthioribose-1-phosphate (MTR-1-P) into methylthioribulose-1-phosphate (MTRu-1-P). This Coccidioides posadasii (strain C735) (Valley fever fungus) protein is Methylthioribose-1-phosphate isomerase.